We begin with the raw amino-acid sequence, 314 residues long: Ribose-phosphate pyrophosphokinase (314 aa).

ATP is bound by residues 37 to 39 (DGE) and 96 to 97 (RQ). Residues H131 and D170 each contribute to the Mg(2+) site. K194 is an active-site residue. Residues R196, D220, and 224–228 (DTGGT) each bind D-ribose 5-phosphate.

The protein belongs to the ribose-phosphate pyrophosphokinase family. Class I subfamily. In terms of assembly, homohexamer. Requires Mg(2+) as cofactor.

The protein resides in the cytoplasm. The catalysed reaction is D-ribose 5-phosphate + ATP = 5-phospho-alpha-D-ribose 1-diphosphate + AMP + H(+). Its pathway is metabolic intermediate biosynthesis; 5-phospho-alpha-D-ribose 1-diphosphate biosynthesis; 5-phospho-alpha-D-ribose 1-diphosphate from D-ribose 5-phosphate (route I): step 1/1. Its function is as follows. Involved in the biosynthesis of the central metabolite phospho-alpha-D-ribosyl-1-pyrophosphate (PRPP) via the transfer of pyrophosphoryl group from ATP to 1-hydroxyl of ribose-5-phosphate (Rib-5-P). This Vibrio vulnificus (strain CMCP6) protein is Ribose-phosphate pyrophosphokinase.